A 224-amino-acid polypeptide reads, in one-letter code: Small ribosomal subunit protein uS3c (224 aa).

A KH type-2 domain is found at 43-124 (IKNYIQKNRK…RLNIAIEKVK (82 aa)).

It belongs to the universal ribosomal protein uS3 family. Part of the 30S ribosomal subunit.

The protein resides in the plastid. Its subcellular location is the chloroplast. This is Small ribosomal subunit protein uS3c (rps3) from Saccharum hybrid (Sugarcane).